The primary structure comprises 457 residues: Adenylyltransferase and sulfurtransferase MOCS3 (457 aa).

The segment at 40 to 60 is disordered; that stretch reads ANGGGNGDGLADEGGERNTGT. Thr63 bears the Phosphothreonine mark. ATP is bound by residues Gly102, Asp123, 130 to 134, Lys147, and 191 to 192; these read SNFHR and DN. Zn(2+) is bound by residues Cys233 and Cys236. Cys250 functions as the Glycyl thioester intermediate; for adenylyltransferase activity in the catalytic mechanism. 2 residues coordinate Zn(2+): Cys309 and Cys312. Positions 358 to 455 constitute a Rhodanese domain; it reads ESQPHLLFDV…WTRKVDPDFP (98 aa). Catalysis depends on Cys414, which acts as the Cysteine persulfide intermediate; for sulfurtransferase activity.

This sequence in the N-terminal section; belongs to the HesA/MoeB/ThiF family. UBA4 subfamily. Zn(2+) is required as a cofactor.

The protein localises to the cytoplasm. It is found in the cytosol. It catalyses the reaction [molybdopterin-synthase sulfur-carrier protein]-C-terminal Gly-Gly + ATP + H(+) = [molybdopterin-synthase sulfur-carrier protein]-C-terminal Gly-Gly-AMP + diphosphate. The catalysed reaction is [molybdopterin-synthase sulfur-carrier protein]-C-terminal Gly-Gly-AMP + S-sulfanyl-L-cysteinyl-[cysteine desulfurase] + AH2 = [molybdopterin-synthase sulfur-carrier protein]-C-terminal-Gly-aminoethanethioate + L-cysteinyl-[cysteine desulfurase] + A + AMP + 2 H(+). Its pathway is tRNA modification; 5-methoxycarbonylmethyl-2-thiouridine-tRNA biosynthesis. The protein operates within cofactor biosynthesis; molybdopterin biosynthesis. Plays a central role in 2-thiolation of mcm(5)S(2)U at tRNA wobble positions of cytosolic tRNA(Lys), tRNA(Glu) and tRNA(Gln). Also essential during biosynthesis of the molybdenum cofactor. Acts by mediating the C-terminal thiocarboxylation of sulfur carriers URM1 and MOCS2A. Its N-terminus first activates URM1 and MOCS2A as acyl-adenylates (-COAMP), then the persulfide sulfur on the catalytic cysteine is transferred to URM1 and MOCS2A to form thiocarboxylation (-COSH) of their C-terminus. The reaction probably involves hydrogen sulfide that is generated from the persulfide intermediate and that acts as a nucleophile towards URM1 and MOCS2A. Subsequently, a transient disulfide bond is formed. Does not use thiosulfate as sulfur donor; NFS1 probably acting as a sulfur donor for thiocarboxylation reactions. This Drosophila willistoni (Fruit fly) protein is Adenylyltransferase and sulfurtransferase MOCS3.